The following is a 386-amino-acid chain: Patatin-B1 (386 aa).

The first 23 residues, 1–23 (MATTKSFLILFFMILATTSSTCA), serve as a signal peptide directing secretion. A PNPLA domain is found at 32–229 (LSIDGGGIKG…TVGDPALLSL (198 aa)). The GXGXXG motif lies at 36-41 (GGGIKG). Positions 75–79 (GTSTG) match the GXSXG motif. The Nucleophile role is filled by Ser77. Asn115 is a glycosylation site (N-linked (GlcNAc...) asparagine). The active-site Proton acceptor is the Asp215. Residues 215 to 217 (DGG) carry the DGA/G motif.

This sequence belongs to the patatin family.

The protein resides in the vacuole. Probable lipolytic acyl hydrolase (LAH), an activity which is thought to be involved in the response of tubers to pathogens. This is Patatin-B1 (PATB1) from Solanum tuberosum (Potato).